The chain runs to 461 residues: Juvenile hormone epoxide hydrolase (461 aa).

The helical transmembrane segment at 4 to 24 (LLFIALPLLVLASIPLYLLVL) threads the bilayer. The active-site Nucleophile is Asp227. Tyr373 (proton donor) is an active-site residue. His430 serves as the catalytic Proton acceptor.

This sequence belongs to the peptidase S33 family. In terms of assembly, homodimer. As to expression, expressed in fat body, foregut and midgut but not in brain, subesophageal ganglia or silk gland of larvae on day 1 of fifth instar.

The protein resides in the microsome membrane. It is found in the endoplasmic reticulum membrane. It carries out the reaction cis-stilbene oxide + H2O = (1R,2R)-hydrobenzoin. It catalyses the reaction 1-(4-methoxyphenyl)-N-methyl-N-[(3-methyloxetan-3-yl)methyl]methanamine + H2O = 2-{[(4-methoxybenzyl)(methyl)amino]methyl}-2-methylpropane-1,3-diol. In terms of biological role, catalyzes juvenile hormone hydrolysis. Degrades juvenile hormone III (JH III) about 3 times and 5 times slower than juvenile hormone I (JH I) and II (JH II), respectively. Degrades cis-stilbene oxide and trans-stilbene oxide about 18 and 43 times slower than JH III, respectively. This Bombyx mori (Silk moth) protein is Juvenile hormone epoxide hydrolase.